The chain runs to 279 residues: Putative potassium channel regulatory protein (279 aa).

Residues 5–74 (ELVTLNVGGM…VRTSQLSLPS (70 aa)) form the BTB domain. A disordered region spans residues 256-279 (ENSRQENYETETVQVKQAKPNKKR).

The protein resides in the endoplasmic reticulum. Functionally, inhibits potassium fluxes in cells, possibly by retaining potassium channels in the cytoplasm. The sequence is that of Putative potassium channel regulatory protein (kcnrg) from Xenopus tropicalis (Western clawed frog).